We begin with the raw amino-acid sequence, 434 residues long: Asparagine--tRNA ligase (434 aa).

Belongs to the class-II aminoacyl-tRNA synthetase family.

The protein resides in the cytoplasm. The enzyme catalyses tRNA(Asn) + L-asparagine + ATP = L-asparaginyl-tRNA(Asn) + AMP + diphosphate + H(+). This Pyrococcus horikoshii (strain ATCC 700860 / DSM 12428 / JCM 9974 / NBRC 100139 / OT-3) protein is Asparagine--tRNA ligase.